Here is a 931-residue protein sequence, read N- to C-terminus: Protein translocase subunit SecA (931 aa).

ATP is bound by residues Gln87, 105–109 (GEGKT), and Asp515. Cys915, Cys917, Cys926, and His927 together coordinate Zn(2+).

It belongs to the SecA family. As to quaternary structure, monomer and homodimer. Part of the essential Sec protein translocation apparatus which comprises SecA, SecYEG and auxiliary proteins SecDF-YajC and YidC. Zn(2+) is required as a cofactor.

The protein resides in the cell inner membrane. Its subcellular location is the cytoplasm. It catalyses the reaction ATP + H2O + cellular proteinSide 1 = ADP + phosphate + cellular proteinSide 2.. Part of the Sec protein translocase complex. Interacts with the SecYEG preprotein conducting channel. Has a central role in coupling the hydrolysis of ATP to the transfer of proteins into and across the cell membrane, serving both as a receptor for the preprotein-SecB complex and as an ATP-driven molecular motor driving the stepwise translocation of polypeptide chains across the membrane. The sequence is that of Protein translocase subunit SecA from Burkholderia pseudomallei (strain K96243).